The following is a 952-amino-acid chain: Disintegrin and metalloproteinase domain-containing protein adm-2 (952 aa).

The Extracellular segment spans residues 1–672 (MTDTLDLKLS…NEAYRFRGIT (672 aa)). Asn-125 and Asn-301 each carry an N-linked (GlcNAc...) asparagine glycan. The region spanning 177-373 (RFVELALVAD…GIDLCLFNEP (197 aa)) is the Peptidase M12B domain. 3 disulfide bridges follow: Cys-287–Cys-368, Cys-330–Cys-352, and Cys-332–Cys-337. His-312 provides a ligand contact to Zn(2+). Glu-313 is a catalytic residue. Zn(2+)-binding residues include His-316 and His-322. Residues 379–466 (DAKCGNGIVE…DCPADFFVQN (88 aa)) form the Disintegrin domain. N-linked (GlcNAc...) asparagine glycosylation is present at Asn-406. 4 disulfide bridges follow: Cys-438/Cys-458, Cys-624/Cys-634, Cys-628/Cys-640, and Cys-642/Cys-651. In terms of domain architecture, EGF-like spans 620–652 (VTAQCLDNCNFRGVCNNVGNCHCERGFGGIACE). Residues 673–693 (LSSTFLVFFCLFGIFIGGLCV) traverse the membrane as a helical segment. Topologically, residues 694–952 (YYRVKRKRNL…AAIFDQKLKK (259 aa)) are cytoplasmic. Disordered stretches follow at residues 778 to 809 (IPMVTLKNPNLASPTPLLNPAEKEEQNQERAT) and 829 to 938 (SFNT…EKVD). Basic and acidic residues-rich tracts occupy residues 798–809 (AEKEEQNQERAT) and 849–873 (PSDDVLSKLNEDLAKEKNAKFDRLN). Positions 905 to 914 (QAPPPPPPAH) are enriched in pro residues. Over residues 925–938 (KVSEDAAATEEKVD) the composition is skewed to basic and acidic residues.

Zn(2+) serves as cofactor. As to expression, expressed in hyp7 large epidermal syncytium (punctate distribution), seam cell syncytia, anterior epidermis, neurons located in the head, tail and central body, proximal oogenic cells (levels increasing in maturing oocytes) and myoepithelial cells of the spermatheca (at protein level). Not detected in mature sperm cells.

The protein localises to the cell membrane. It localises to the endosome membrane. It is found in the lysosome membrane. Metalloprotease that cleaves and releases a number of molecules. Negative regulator of lrp-1 protein levels, potentially by influencing its endosomal trafficking. Involved in regulating the molting process. The polypeptide is Disintegrin and metalloproteinase domain-containing protein adm-2 (Caenorhabditis elegans).